The primary structure comprises 348 residues: Putative S-adenosyl-L-methionine-dependent methyltransferase MRA_3439 (348 aa).

S-adenosyl-L-methionine is bound by residues D171 and 200–201 (DL).

Belongs to the UPF0677 family.

Its function is as follows. Exhibits S-adenosyl-L-methionine-dependent methyltransferase activity. This Mycobacterium tuberculosis (strain ATCC 25177 / H37Ra) protein is Putative S-adenosyl-L-methionine-dependent methyltransferase MRA_3439.